A 258-amino-acid polypeptide reads, in one-letter code: Aspartate/glutamate leucyltransferase (258 aa).

This sequence belongs to the R-transferase family. Bpt subfamily.

Its subcellular location is the cytoplasm. The enzyme catalyses N-terminal L-glutamyl-[protein] + L-leucyl-tRNA(Leu) = N-terminal L-leucyl-L-glutamyl-[protein] + tRNA(Leu) + H(+). The catalysed reaction is N-terminal L-aspartyl-[protein] + L-leucyl-tRNA(Leu) = N-terminal L-leucyl-L-aspartyl-[protein] + tRNA(Leu) + H(+). Its function is as follows. Functions in the N-end rule pathway of protein degradation where it conjugates Leu from its aminoacyl-tRNA to the N-termini of proteins containing an N-terminal aspartate or glutamate. The sequence is that of Aspartate/glutamate leucyltransferase from Rhizobium johnstonii (strain DSM 114642 / LMG 32736 / 3841) (Rhizobium leguminosarum bv. viciae).